Reading from the N-terminus, the 488-residue chain is Ribulose bisphosphate carboxylase large chain 1 (488 aa).

Substrate is bound by residues N128 and T178. K180 acts as the Proton acceptor in catalysis. K182 provides a ligand contact to substrate. The Mg(2+) site is built by K206, D208, and E209. At K206 the chain carries N6-carboxylysine. The Proton acceptor role is filled by H298. R299, H331, and S383 together coordinate substrate.

Belongs to the RuBisCO large chain family. Type I subfamily. As to quaternary structure, heterohexadecamer of 8 large chains and 8 small chains. The cofactor is Mg(2+).

It carries out the reaction 2 (2R)-3-phosphoglycerate + 2 H(+) = D-ribulose 1,5-bisphosphate + CO2 + H2O. The catalysed reaction is D-ribulose 1,5-bisphosphate + O2 = 2-phosphoglycolate + (2R)-3-phosphoglycerate + 2 H(+). In terms of biological role, ruBisCO catalyzes two reactions: the carboxylation of D-ribulose 1,5-bisphosphate, the primary event in carbon dioxide fixation, as well as the oxidative fragmentation of the pentose substrate. Both reactions occur simultaneously and in competition at the same active site. The polypeptide is Ribulose bisphosphate carboxylase large chain 1 (Nitrobacter hamburgensis (strain DSM 10229 / NCIMB 13809 / X14)).